Consider the following 92-residue polypeptide: Small ribosomal subunit protein bS18A (92 aa).

It belongs to the bacterial ribosomal protein bS18 family. Part of the 30S ribosomal subunit. Forms a tight heterodimer with protein bS6.

In terms of biological role, binds as a heterodimer with protein bS6 to the central domain of the 16S rRNA, where it helps stabilize the platform of the 30S subunit. This Cupriavidus pinatubonensis (strain JMP 134 / LMG 1197) (Cupriavidus necator (strain JMP 134)) protein is Small ribosomal subunit protein bS18A.